Consider the following 359-residue polypeptide: 3-dehydroquinate synthase (359 aa).

NAD(+) is bound by residues 71-76, 105-109, 129-130, lysine 142, and lysine 151; these read DGEAYK, GVIGD, and TT. Zn(2+) contacts are provided by glutamate 184, histidine 247, and histidine 264.

This sequence belongs to the sugar phosphate cyclases superfamily. Dehydroquinate synthase family. Co(2+) is required as a cofactor. Zn(2+) serves as cofactor. The cofactor is NAD(+).

The protein resides in the cytoplasm. It catalyses the reaction 7-phospho-2-dehydro-3-deoxy-D-arabino-heptonate = 3-dehydroquinate + phosphate. The protein operates within metabolic intermediate biosynthesis; chorismate biosynthesis; chorismate from D-erythrose 4-phosphate and phosphoenolpyruvate: step 2/7. In terms of biological role, catalyzes the conversion of 3-deoxy-D-arabino-heptulosonate 7-phosphate (DAHP) to dehydroquinate (DHQ). This is 3-dehydroquinate synthase from Burkholderia ambifaria (strain ATCC BAA-244 / DSM 16087 / CCUG 44356 / LMG 19182 / AMMD) (Burkholderia cepacia (strain AMMD)).